The primary structure comprises 337 residues: Outer membrane protein U (337 aa).

Positions 1–21 (MKKTLIALSVSAAAMATGVNA) are cleaved as a signal peptide.

This sequence belongs to the Gram-negative porin family. In terms of assembly, homotrimer.

Its subcellular location is the cell outer membrane. Its function is as follows. Forms pores that allow passive diffusion of small molecules across the outer membrane. In Vibrio parahaemolyticus serotype O3:K6 (strain RIMD 2210633), this protein is Outer membrane protein U (ompU).